A 545-amino-acid polypeptide reads, in one-letter code: Membrane protein insertase YidC (545 aa).

4 consecutive transmembrane segments (helical) span residues 350–370 (IIGN…AVLY), 424–444 (LPML…FASV), 461–481 (ADPY…QTYL), and 498–518 (PLVF…YWVI).

This sequence belongs to the OXA1/ALB3/YidC family. Type 1 subfamily. Interacts with the Sec translocase complex via SecD. Specifically interacts with transmembrane segments of nascent integral membrane proteins during membrane integration.

It localises to the cell inner membrane. Its function is as follows. Required for the insertion and/or proper folding and/or complex formation of integral membrane proteins into the membrane. Involved in integration of membrane proteins that insert both dependently and independently of the Sec translocase complex, as well as at least some lipoproteins. Aids folding of multispanning membrane proteins. In Neisseria meningitidis serogroup A / serotype 4A (strain DSM 15465 / Z2491), this protein is Membrane protein insertase YidC.